The primary structure comprises 248 residues: Ubiquinone/menaquinone biosynthesis C-methyltransferase UbiE (248 aa).

Residues Ser68 and Asp92 each contribute to the S-adenosyl-L-methionine site.

It belongs to the class I-like SAM-binding methyltransferase superfamily. MenG/UbiE family.

It catalyses the reaction a 2-demethylmenaquinol + S-adenosyl-L-methionine = a menaquinol + S-adenosyl-L-homocysteine + H(+). The enzyme catalyses a 2-methoxy-6-(all-trans-polyprenyl)benzene-1,4-diol + S-adenosyl-L-methionine = a 5-methoxy-2-methyl-3-(all-trans-polyprenyl)benzene-1,4-diol + S-adenosyl-L-homocysteine + H(+). The protein operates within quinol/quinone metabolism; menaquinone biosynthesis; menaquinol from 1,4-dihydroxy-2-naphthoate: step 2/2. It functions in the pathway cofactor biosynthesis; ubiquinone biosynthesis. Functionally, methyltransferase required for the conversion of demethylmenaquinol (DMKH2) to menaquinol (MKH2) and the conversion of 2-polyprenyl-6-methoxy-1,4-benzoquinol (DDMQH2) to 2-polyprenyl-3-methyl-6-methoxy-1,4-benzoquinol (DMQH2). This chain is Ubiquinone/menaquinone biosynthesis C-methyltransferase UbiE, found in Rickettsia rickettsii (strain Iowa).